Reading from the N-terminus, the 124-residue chain is Fluoride-specific ion channel FluC 2 (124 aa).

The next 4 helical transmembrane spans lie at 8–28 (LPNQWNEMWLVAFGAVPGALV), 34–54 (NDLLVNVIGAAILGLVVGLPF), 60–80 (LLLGVGFCGSLTTFSSWMVEC), and 93–113 (LGLIGLTMGLGLGVAALGFLI). 2 residues coordinate Na(+): Gly-68 and Thr-71.

Belongs to the fluoride channel Fluc/FEX (TC 1.A.43) family.

It localises to the cell inner membrane. The enzyme catalyses fluoride(in) = fluoride(out). Na(+) is not transported, but it plays an essential structural role and its presence is essential for fluoride channel function. In terms of biological role, fluoride-specific ion channel. Important for reducing fluoride concentration in the cell, thus reducing its toxicity. The chain is Fluoride-specific ion channel FluC 2 from Prochlorococcus marinus (strain MIT 9313).